Reading from the N-terminus, the 362-residue chain is Chorismate synthase (362 aa).

R47 is an NADP(+) binding site. FMN contacts are provided by residues 124-126 (RSS), G286, 301-305 (KPTAT), and R327.

The protein belongs to the chorismate synthase family. Homotetramer. FMNH2 is required as a cofactor.

It catalyses the reaction 5-O-(1-carboxyvinyl)-3-phosphoshikimate = chorismate + phosphate. The protein operates within metabolic intermediate biosynthesis; chorismate biosynthesis; chorismate from D-erythrose 4-phosphate and phosphoenolpyruvate: step 7/7. Functionally, catalyzes the anti-1,4-elimination of the C-3 phosphate and the C-6 proR hydrogen from 5-enolpyruvylshikimate-3-phosphate (EPSP) to yield chorismate, which is the branch point compound that serves as the starting substrate for the three terminal pathways of aromatic amino acid biosynthesis. This reaction introduces a second double bond into the aromatic ring system. The polypeptide is Chorismate synthase (Synechocystis sp. (strain ATCC 27184 / PCC 6803 / Kazusa)).